Here is a 142-residue protein sequence, read N- to C-terminus: Large ribosomal subunit protein uL11 (142 aa).

The protein belongs to the universal ribosomal protein uL11 family. Part of the ribosomal stalk of the 50S ribosomal subunit. Interacts with L10 and the large rRNA to form the base of the stalk. L10 forms an elongated spine to which L12 dimers bind in a sequential fashion forming a multimeric L10(L12)X complex. One or more lysine residues are methylated.

Functionally, forms part of the ribosomal stalk which helps the ribosome interact with GTP-bound translation factors. The polypeptide is Large ribosomal subunit protein uL11 (Nitrobacter hamburgensis (strain DSM 10229 / NCIMB 13809 / X14)).